The following is a 278-amino-acid chain: Non-homologous end joining protein Ku (278 aa).

Residues 9-172 enclose the Ku domain; it reads ISFGLVNIPV…MHFAQELVDV (164 aa). Residues 255–278 form a disordered region; sequence NQTGAGAKKKPAKTAKRGKSRKAA. Residues 261–278 are compositionally biased toward basic residues; the sequence is AKKKPAKTAKRGKSRKAA.

It belongs to the prokaryotic Ku family. Homodimer. Interacts with LigD.

Functionally, with LigD forms a non-homologous end joining (NHEJ) DNA repair enzyme, which repairs dsDNA breaks with reduced fidelity. Binds linear dsDNA with 5'- and 3'- overhangs but not closed circular dsDNA nor ssDNA. Recruits and stimulates the ligase activity of LigD. The polypeptide is Non-homologous end joining protein Ku (Opitutus terrae (strain DSM 11246 / JCM 15787 / PB90-1)).